We begin with the raw amino-acid sequence, 2803 residues long: Microtubule-associated protein 1A (2803 aa).

A phosphoserine mark is found at S114, S117, S118, S121, and S155. Y177 carries the post-translational modification Phosphotyrosine. 2 disordered regions span residues 302 to 466 and 486 to 516; these read GAVP…DLKP and IDRS…PLPT. Phosphoserine occurs at positions 319, 322, and 384. A compositionally biased stretch (basic and acidic residues) spans 335-390; it reads AKREEVVEEGAKEARSELAKELAKTEKKAKESSEKPPEKPAKPERVKTESSEALKA. Residues 391–406 show a composition bias toward basic residues; sequence EKRKLIKDKVGKKHLK. Composition is skewed to basic and acidic residues over residues 407–464 and 486–499; these read EKIS…KPDL and IDRS…KELS. Repeat copies occupy residues 415–417, 420–422, 427–429, 431–433, 436–438, 440–442, 444–446, and 449–451. Residues 415–541 form a 9 X 3 AA repeats of K-K-[DE] region; sequence KKDKEKKEIK…TQDFEEMKRE (127 aa). T504 carries the post-translational modification Phosphothreonine. S526 and S527 each carry phosphoserine. Repeat unit 9 spans residues 539–541; it reads KRE. Composition is skewed to basic and acidic residues over residues 539–554 and 585–596; these read KREE…DTGL and QEEHVMKEKELV. Disordered stretches follow at residues 539–712, 734–806, 847–1080, 1109–1548, and 1573–1605; these read KREE…KAPE, YIQD…GTPE, EDQS…VNID, TGPI…EKKD, and EENH…EKVK. S605 and S612 each carry phosphoserine. A Phosphothreonine modification is found at T616. Residues 623–667 are compositionally biased toward basic and acidic residues; sequence WEEKKQREAERLPDRTEAREESEPEVKEDVIEKAELEEMEEVHPS. Residues S644, S667, and S787 each carry the phosphoserine modification. 2 stretches are compositionally biased toward polar residues: residues 847-860 and 871-883; these read EDQS…PQTE and TVTS…TEAT. Residues S874, S877, S878, and S891 each carry the phosphoserine modification. The residue at position 894 (T894) is a Phosphothreonine. Residues S896, S900, S909, S986, S996, S1004, S1013, S1019, and S1029 each carry the phosphoserine modification. Over residues 1031 to 1065 the composition is skewed to basic and acidic residues; it reads GDTKRTPGVGKEDAAEETVKPGPEEGTLEKEEKVP. Phosphoserine occurs at positions 1069, 1144, 1146, 1160, 1172, 1190, 1200, 1203, 1209, 1218, 1221, and 1264. Positions 1131-1146 are enriched in basic and acidic residues; it reads KPQKDEVLRYPDRSLS. Positions 1154–1169 are enriched in polar residues; that stretch reads SVLSVPSPDTANQEPT. Composition is skewed to polar residues over residues 1211–1224 and 1264–1278; these read DVSS…SLGT and SPPT…AQTD. Low complexity predominate over residues 1289–1299; the sequence is PASSFSHSTPS. Residues S1326, S1329, S1544, S1600, and S1626 each carry the phosphoserine modification. Composition is skewed to basic and acidic residues over residues 1338 to 1548 and 1586 to 1605; these read IAIK…EKKD and QEDK…EKVK. The span at 1632-1642 shows a compositional bias: basic and acidic residues; that stretch reads RAREQEEKYWR. Disordered stretches follow at residues 1632–1684, 1713–1879, and 1892–2673; these read RARE…RYWR, DGQG…FSWG, and EGAA…LVNG. At S1654 the chain carries Phosphoserine. Residues 1655-1666 show a composition bias toward basic and acidic residues; that stretch reads PTREEPAGEQKE. A phosphoserine mark is found at S1675, S1749, S1762, S1776, S1791, S1797, S1801, S1812, and S1818. Over residues 1852–1867 the composition is skewed to pro residues; the sequence is LPPAPLSPAPGPPTPA. Residues 1907–1929 are compositionally biased toward basic and acidic residues; sequence KDYRKAEGEREEEGRAEAPDKSS. Position 1931 is a phosphoserine (S1931). Residues 1951–1964 show a composition bias toward basic and acidic residues; that stretch reads PEQREPTPYPDERS. At T1957 the chain carries Phosphothreonine. Polar residues predominate over residues 2019–2033; that stretch reads SPISPKSLQSDTPTF. At S2022 the chain carries Phosphoserine. Residues 2042-2066 show a composition bias toward pro residues; it reads TVPPRPEPGPSMEPSLTPPAVPPRA. Phosphothreonine is present on T2058. Phosphoserine occurs at positions 2074, 2104, 2106, and 2108. The segment covering 2086–2122 has biased composition (basic and acidic residues); that stretch reads PDRRSPSPKESGRSHWDDSTSDSELEKGAREQPEKEA. Residues 2175–2184 are compositionally biased toward pro residues; it reads PAPPQLPSPA. S2235, S2252, S2256, S2259, and S2260 each carry phosphoserine. Residues 2257-2268 are compositionally biased toward polar residues; the sequence is EGSSSEATTPVI. Over residues 2312-2325 the composition is skewed to low complexity; it reads ASLDLALAPAPSLP. S2449 bears the Phosphoserine mark. A compositionally biased stretch (basic and acidic residues) spans 2461–2473; that stretch reads IDDRDLSTEEVRL. Over residues 2502-2514 the composition is skewed to low complexity; sequence SASDSGSSQSDSD. Positions 2559 to 2575 are enriched in pro residues; sequence DPPPLPQPDPRPSPPRP. The segment covering 2590-2602 has biased composition (basic and acidic residues); that stretch reads GRVERLREKEKVQ. A phosphoserine mark is found at S2649 and S2664.

This sequence belongs to the MAP1 family. As to quaternary structure, 3 different light chains, LC1 (a cleavage product of MAP1B), LC2 (a cleavage product of MAP1A) and LC3 (produced by one of the MAP1LC3 genes), can associate with the MAP1A or MAP1B heavy chains. Interacts with TIAM2. Interacts with guanylate kinase-like domain of DLG1, DLG2 and DLG4. Binds to CSNK1D. In terms of assembly, interacts with ELAVL4. Phosphorylated by CSNK1D. Post-translationally, LC2 is generated from MAP1A by proteolytic processing. As to expression, brain.

The protein localises to the cytoplasm. Its subcellular location is the cytoskeleton. In terms of biological role, structural protein involved in the filamentous cross-bridging between microtubules and other skeletal elements. The chain is Microtubule-associated protein 1A (MAP1A) from Homo sapiens (Human).